Consider the following 614-residue polypeptide: MTASATRQRPEADLGTAEWLVCDGCRRMIYGRRFARGGHVCPECGWHARLTATQRIALLLDEGSVEVVDTPVTAADPLQFVDTRPYADRLRSARTSTGLTEAVVVARGRIEGCPVVTAVMDFRFLGGSLGAAVGEAITGACEIALRERTPLLLVTASGGARMQEGALSLMQMAKTAQAIGQLDEAGILTVSLITDPTFGGVAASFATLTDVIVAEPGARLGFAGARVIEQTIRQTLPPGFQTAEFLLEHGVVDLISPRGQLRPTLARLLGVATRRPGTAPVTPGDGHSAGDGRGAGDSRGASHGGDGVVRDPARLADRHPWEAVRLARRLGRPSTLDYIGALVEDWTELHGDRAATDCPAMVAGLGRLDGTPVVVIGTQKGHTATELAARSYGMPSPGGYRKAARVMRLAAKLGLPVITLIDTAGAHPGLEAEQNGQAVAIAENLRLMAGLPVPVVAVVTGEGGSGGALALAVANRVLMCANAIYSVISPEGCAAILWKDPAAGPDAAAALRVDARALLAAGIVDGVVPEPDGGADVDPLAATDALRAALTGALAELAPLDPPTLVTARRARFRRFGTPAPAGGAAPAPVVPAARPPLGAGRTHADLDDARRAS.

The interval 1 to 250 is acetyl-coenzyme A carboxylase carboxyl transferase subunit beta; the sequence is MTASATRQRP…QTAEFLLEHG (250 aa). Positions 18–287 constitute a CoA carboxyltransferase N-terminal domain; it reads EWLVCDGCRR…TAPVTPGDGH (270 aa). A carboxyltransferase region spans residues 18–556; sequence EWLVCDGCRR…RAALTGALAE (539 aa). Residues C22, C25, C41, and C44 each contribute to the Zn(2+) site. Residues 22-44 form a C4-type zinc finger; sequence CDGCRRMIYGRRFARGGHVCPEC. The interval 251–614 is acetyl-coenzyme A carboxylase carboxyl transferase subunit alpha; it reads VVDLISPRGQ…ADLDDARRAS (364 aa). 2 disordered regions span residues 272 to 314 and 577 to 614; these read ATRR…DPAR and GTPA…RRAS. Gly residues predominate over residues 297 to 307; that stretch reads DSRGASHGGDG. A CoA carboxyltransferase C-terminal domain is found at 311–556; that stretch reads DPARLADRHP…RAALTGALAE (246 aa). Low complexity predominate over residues 579–602; that stretch reads PAPAGGAAPAPVVPAARPPLGAGR. The span at 603–614 shows a compositional bias: basic and acidic residues; the sequence is THADLDDARRAS.

This sequence in the N-terminal section; belongs to the AccD/PCCB family. In the C-terminal section; belongs to the AccA family. In terms of assembly, acetyl-CoA carboxylase is a heterotetramer composed of biotin carboxyl carrier protein (AccB), biotin carboxylase (AccC) and two subunits of ACCase subunit beta/alpha. Requires Zn(2+) as cofactor.

It is found in the cytoplasm. The catalysed reaction is N(6)-carboxybiotinyl-L-lysyl-[protein] + acetyl-CoA = N(6)-biotinyl-L-lysyl-[protein] + malonyl-CoA. The protein operates within lipid metabolism; malonyl-CoA biosynthesis; malonyl-CoA from acetyl-CoA: step 1/1. In terms of biological role, component of the acetyl coenzyme A carboxylase (ACC) complex. Biotin carboxylase (BC) catalyzes the carboxylation of biotin on its carrier protein (BCCP) and then the CO(2) group is transferred by the transcarboxylase to acetyl-CoA to form malonyl-CoA. The polypeptide is Acetyl-coenzyme A carboxylase carboxyl transferase subunits beta/alpha (accD) (Parafrankia sp. (strain EAN1pec)).